We begin with the raw amino-acid sequence, 354 residues long: Neuronal growth regulator 1 (354 aa).

Residues 1-37 (MDMMLLVQGACCSNQWLAAVLLSLCCLLPSCLPAGQS) form the signal peptide. Ig-like C2-type domains are found at residues 38 to 134 (VDFP…VHLT), 139 to 221 (PKIY…KVVV), and 225 to 313 (PTIQ…LPLN). Cys-60 and Cys-118 are oxidised to a cystine. N-linked (GlcNAc...) asparagine glycosylation is found at Asn-73 and Asn-155. Intrachain disulfides connect Cys-160–Cys-203 and Cys-245–Cys-297. A Phosphotyrosine modification is found at Tyr-187. N-linked (GlcNAc...) asparagine glycans are attached at residues Asn-275, Asn-286, Asn-294, and Asn-307. A lipid anchor (GPI-anchor amidated glycine) is attached at Gly-324. Positions 325 to 354 (SADVLFSCWYLVLTLSSFTSIFYLKNAILQ) are cleaved as a propeptide — removed in mature form.

This sequence belongs to the immunoglobulin superfamily. IgLON family.

The protein localises to the cell membrane. In terms of biological role, may be involved in cell-adhesion. May function as a trans-neural growth-promoting factor in regenerative axon sprouting in the mammalian brain. The sequence is that of Neuronal growth regulator 1 (NEGR1) from Pongo abelii (Sumatran orangutan).